A 120-amino-acid polypeptide reads, in one-letter code: Ribosome-binding factor A (120 aa).

The protein belongs to the RbfA family. As to quaternary structure, monomer. Binds 30S ribosomal subunits, but not 50S ribosomal subunits or 70S ribosomes.

The protein localises to the cytoplasm. In terms of biological role, one of several proteins that assist in the late maturation steps of the functional core of the 30S ribosomal subunit. Associates with free 30S ribosomal subunits (but not with 30S subunits that are part of 70S ribosomes or polysomes). Required for efficient processing of 16S rRNA. May interact with the 5'-terminal helix region of 16S rRNA. This Clostridium botulinum (strain Loch Maree / Type A3) protein is Ribosome-binding factor A.